Consider the following 458-residue polypeptide: Monomethylamine methyltransferase MtmB1 (458 aa).

Position 202 (Pyl-202) is a non-standard amino acid, pyrrolysine.

It belongs to the monomethylamine methyltransferase family. As to quaternary structure, dimer of homotrimers. Can form a complex with MtmC (MtmC1 or MtmC2).

The catalysed reaction is Co(I)-[methylamine-specific corrinoid protein] + methylamine + H(+) = methyl-Co(III)-[methylamine-specific corrinoid protein] + NH4(+). It functions in the pathway one-carbon metabolism; methanogenesis from methylamine. In terms of biological role, catalyzes the transfer of the methyl group from monomethylamine to the corrinoid cofactor of MtmC (MtmC1 or MtmC2). In Methanosarcina barkeri, this protein is Monomethylamine methyltransferase MtmB1 (mtmB1).